Here is a 431-residue protein sequence, read N- to C-terminus: Ribosome assembly protein SQT1 (431 aa).

WD repeat units lie at residues 63-102, 107-146, 149-192, 199-243, 309-348, and 350-387; these read KHTD…PKFA, GYGE…AQWK, SQMQ…GSLE, VHQQ…QLFK, ELDA…VRHK, and VLED…EKFV.

Interacts strongly with QSR1. Part of an oligomeric protein complex that is loosely associated with ribosomes.

In terms of biological role, may be involved in the late step of 60S ribosomal subunit assembly or modification in the cytoplasm. In Saccharomyces cerevisiae (strain ATCC 204508 / S288c) (Baker's yeast), this protein is Ribosome assembly protein SQT1 (SQT1).